Consider the following 880-residue polypeptide: Alanine--tRNA ligase (880 aa).

His-567, His-571, Cys-669, and His-673 together coordinate Zn(2+).

Belongs to the class-II aminoacyl-tRNA synthetase family. Zn(2+) is required as a cofactor.

It localises to the cytoplasm. It carries out the reaction tRNA(Ala) + L-alanine + ATP = L-alanyl-tRNA(Ala) + AMP + diphosphate. Functionally, catalyzes the attachment of alanine to tRNA(Ala) in a two-step reaction: alanine is first activated by ATP to form Ala-AMP and then transferred to the acceptor end of tRNA(Ala). Also edits incorrectly charged Ser-tRNA(Ala) and Gly-tRNA(Ala) via its editing domain. In Bacillus cytotoxicus (strain DSM 22905 / CIP 110041 / 391-98 / NVH 391-98), this protein is Alanine--tRNA ligase.